The primary structure comprises 90 residues: Accessory gland-specific peptide 26Ab (90 aa).

The signal sequence occupies residues 1-21; it reads MNYFAVICIFSCICLWQFSDA.

Main cells and secondary cells of the accessory glands of 1 day old virgin males (at protein level). In 5 day old virgin males, only detected in the secondary cells (at protein level). Reappears in the main cells after mating (at protein level). First detected in adult males 3-4 hr after eclosion, levels increase reaching a peak at day 3-5 which is maintained until at least day 10 of adulthood (at protein level). In unmated male adults, levels are maintained for the first 6 days of adulthood and then gradually decrease for at least the next 8 days. No expression in females.

It is found in the secreted. The protein localises to the extracellular space. It localises to the cytoplasm. This protein is transferred from male to female during mating and may affect egglaying and behavior after mating. This is Accessory gland-specific peptide 26Ab from Drosophila melanogaster (Fruit fly).